The sequence spans 551 residues: MPIGNLGNNVNSNNLIPPAPPLPSQTDGASRGGAGQLINSTGALGSRLLFSPLRNSIADSVDSRDIPGLPVHPSRLATATSEICLLGGFEVLHDKGPLDTLNKQIGASAFRIEQQSDGSYAAIGEKNGVEVSVILNSQELQSLQAIDIEDKGRFVFTGGRGGGGHSMVTPASDIAEARAKILAKLDPNNHGGSQARNVDTRSVGVGSASGMDDSVVSETRTSSTASSVRSDPKFWVSIGAIAAGLAGLAATGITQALALTPEPDDPTTTDPEQAASAAESATRDQLTQEAFKNPENQKVSIDEIGNSIPSGELKDDVVAKIEEQAKEAGEAARQQAVESNAQAQQRYDTQYARRQEELELSSGIGYSLSSALIVGGGIGAGVTTALHRRNQPAEQTTTTTTHTVVQQQTGGNTPAQGGTDAIRAEDTSLNRRDSQRSTASTHWSDTSSAVVNPYAEVGEARNSSPARQAEEHIYDEVAADPNYSVIQNFSGNNQVTGRLMGTPGQGIQSTYAILTNNSAGLRLGMGGLTGSGGSAVNTANAAPTPGPGRFV.

2 stretches are compositionally biased toward low complexity: residues 1–15 and 212–229; these read MPIGNLGNNVNSNNL and DDSVVSETRTSSTASSVR. Disordered stretches follow at residues 1 to 36 and 186 to 229; these read MPIGNLGNNVNSNNLIPPAPPLPSQTDGASRGGAGQ and DPNN…SSVR. Topologically, residues 1–233 are cytoplasmic; that stretch reads MPIGNLGNNV…TASSVRSDPK (233 aa). A helical membrane pass occupies residues 234–254; the sequence is FWVSIGAIAAGLAGLAATGIT. Residues 255-362 lie on the Extracellular side of the membrane; that stretch reads QALALTPEPD…RRQEELELSS (108 aa). Residues 259–311 form a disordered region; that stretch reads LTPEPDDPTTTDPEQAASAAESATRDQLTQEAFKNPENQKVSIDEIGNSIPSG. A compositionally biased stretch (polar residues) spans 283-299; that stretch reads RDQLTQEAFKNPENQKV. Residues 363 to 383 traverse the membrane as a helical segment; sequence GIGYSLSSALIVGGGIGAGVT. Over 384–551 the chain is Cytoplasmic; that stretch reads TALHRRNQPA…APTPGPGRFV (168 aa). Residues 389 to 450 are disordered; it reads RNQPAEQTTT…THWSDTSSAV (62 aa). Residues 395–409 show a composition bias toward low complexity; the sequence is QTTTTTTHTVVQQQT. The span at 422 to 435 shows a compositional bias: basic and acidic residues; sequence IRAEDTSLNRRDSQ. Positions 436–450 are enriched in polar residues; it reads RSTASTHWSDTSSAV. An Essential for actin pedestal formation motif is present at residues 452 to 454; that stretch reads NPY.

It belongs to the Tir receptor family. As to quaternary structure, interacts with intimin and host proteins. In terms of processing, phosphorylated by host kinases.

Its subcellular location is the secreted. The protein resides in the host cell membrane. Multifunctional protein that is required for efficient pedestal formation in host epithelial cells during infection. The extracellular region acts as a receptor for bacterial intimin, allowing the bacterium to attach tightly to the host-cell surface. Simultaneously, the intracellular region initiates a signaling cascade in the host cell, which leads to actin polymerization and formation of actin pedestals at the sites of bacterial adhesion. This chain is Translocated intimin receptor Tir (tir), found in Escherichia coli O111:H- (strain 11128 / EHEC).